We begin with the raw amino-acid sequence, 271 residues long: Chorismate dehydratase (271 aa).

Belongs to the MqnA/MqnD family. MqnA subfamily.

The enzyme catalyses chorismate = 3-[(1-carboxyvinyl)-oxy]benzoate + H2O. The protein operates within quinol/quinone metabolism; menaquinone biosynthesis. Catalyzes the dehydration of chorismate into 3-[(1-carboxyvinyl)oxy]benzoate, a step in the biosynthesis of menaquinone (MK, vitamin K2). In Thermus thermophilus (strain ATCC 27634 / DSM 579 / HB8), this protein is Chorismate dehydratase.